Here is a 382-residue protein sequence, read N- to C-terminus: ATP phosphoribosyltransferase regulatory subunit (382 aa).

It belongs to the class-II aminoacyl-tRNA synthetase family. HisZ subfamily. Heteromultimer composed of HisG and HisZ subunits.

The protein localises to the cytoplasm. The protein operates within amino-acid biosynthesis; L-histidine biosynthesis; L-histidine from 5-phospho-alpha-D-ribose 1-diphosphate: step 1/9. Required for the first step of histidine biosynthesis. May allow the feedback regulation of ATP phosphoribosyltransferase activity by histidine. The sequence is that of ATP phosphoribosyltransferase regulatory subunit from Burkholderia ambifaria (strain ATCC BAA-244 / DSM 16087 / CCUG 44356 / LMG 19182 / AMMD) (Burkholderia cepacia (strain AMMD)).